The chain runs to 335 residues: GTPase Obg (335 aa).

Positions 1-159 (MKFVDSAKIS…YELEMELKLM (159 aa)) constitute an Obg domain. The OBG-type G domain maps to 160–323 (ADVGLVGFPN…LKDELWRQVS (164 aa)). Residues 166–173 (GFPNAGKS), 191–195 (FTTLV), 213–216 (DIPG), 280–283 (TKMD), and 304–306 (SSV) contribute to the GTP site. Positions 173 and 193 each coordinate Mg(2+).

It belongs to the TRAFAC class OBG-HflX-like GTPase superfamily. OBG GTPase family. Monomer. Mg(2+) is required as a cofactor.

It is found in the cytoplasm. In terms of biological role, an essential GTPase which binds GTP, GDP and possibly (p)ppGpp with moderate affinity, with high nucleotide exchange rates and a fairly low GTP hydrolysis rate. Plays a role in control of the cell cycle, stress response, ribosome biogenesis and in those bacteria that undergo differentiation, in morphogenesis control. The sequence is that of GTPase Obg from Chlorobaculum tepidum (strain ATCC 49652 / DSM 12025 / NBRC 103806 / TLS) (Chlorobium tepidum).